The primary structure comprises 477 residues: Glycogen synthase (477 aa).

An ADP-alpha-D-glucose-binding site is contributed by lysine 15.

The protein belongs to the glycosyltransferase 1 family. Bacterial/plant glycogen synthase subfamily.

It catalyses the reaction [(1-&gt;4)-alpha-D-glucosyl](n) + ADP-alpha-D-glucose = [(1-&gt;4)-alpha-D-glucosyl](n+1) + ADP + H(+). Its pathway is glycan biosynthesis; glycogen biosynthesis. Functionally, synthesizes alpha-1,4-glucan chains using ADP-glucose. In Streptococcus pneumoniae serotype 19F (strain G54), this protein is Glycogen synthase.